Consider the following 886-residue polypeptide: Cadherin-1 (886 aa).

An N-terminal signal peptide occupies residues 1–23 (MGARCRSFSALLLLLQVSSWLCQ). The propeptide occupies 24–158 (QPESESDSCR…FHQGLRRQKR (135 aa)). Over 24-713 (QPESESDSCR…SLEAGLQVPA (690 aa)) the chain is Extracellular. 5 consecutive Cadherin domains span residues 159-266 (DWVI…RPEF), 267-379 (IQEV…APIF), 380-490 (NPST…APIF), 491-597 (VPAE…DNAP), and 598-701 (IPEP…NCMK). D261 contacts Ca(2+). S284 and S289 each carry an O-linked (Man...) serine glycan. Residue D292 coordinates Ca(2+). O-linked (Man...) threonine glycosylation is found at T362, T474, T476, and T513. N562 carries an N-linked (GlcNAc...) asparagine glycan. O-linked (Man...) threonine glycans are attached at residues T580, T582, and T584. N-linked (GlcNAc...) asparagine glycosylation is present at N641. The chain crosses the membrane as a helical span at residues 714 to 734 (ILGILGGILALLILILLLLLF). At 735-886 (LRRRTVVKEP…ADMYGGGEED (152 aa)) the chain is on the cytoplasmic side. Positions 751 to 771 (DTRDNVYYYDEEGGGEEDQDF) are disordered. Y757, Y758, and Y759 each carry phosphotyrosine; by SRC. Positions 759–771 (YDEEGGGEEDQDF) are enriched in acidic residues. A required for binding CTNND1 and PSEN1 region spans residues 762–773 (EGGGEEDQDFDL). S774, S797, S842, S844, and S850 each carry phosphoserine. The interval 815–886 (IDENLKAADS…ADMYGGGEED (72 aa)) is required for binding alpha, beta and.

Homodimer; disulfide-linked. Component of an E-cadherin/ catenin adhesion complex composed of at least E-cadherin/CDH1, beta-catenin/CTNNB1 or gamma-catenin/JUP, and potentially alpha-catenin/CTNNA1; the complex is located to adherens junctions. Found in a complex composed of CDH1, RAP1A and PKP3; PKP3 acts as a scaffold protein within the complex, the complex is required for CDH1 localization to mature desmosome cell junctions. Interacts with the TRPV4 and CTNNB1 complex. Interacts with CTNND1. The stable association of CTNNA1 is controversial as CTNNA1 was shown not to bind to F-actin when assembled in the complex. Alternatively, the CTNNA1-containing complex may be linked to F-actin by other proteins such as LIMA1. Interaction with PSEN1, cleaves CDH1 resulting in the disassociation of cadherin-based adherens junctions (CAJs). Interacts with AJAP1 and DLGAP5. Interacts with TBC1D2. Interacts with LIMA1. Interacts with CAV1. Interacts with PIP5K1C. Interacts with DDR1; this stabilizes CDH1 at the cell surface and inhibits its internalization. Interacts with RAPGEF2. Interacts with RAB8B. Interacts with KLRG1. Forms a ternary complex composed of ADAM10, CADH1 and EPHA4; within the complex, CADH1 is cleaved by ADAM10 which disrupts adherens junctions. Interacts with SPEF1. Interacts with CTNNB1 and PKP2. Interacts with AMOTL2; the interaction may facilitate binding of radial actin fibers to cell junction complexes. Interacts with DSG3; the interaction is required for CDH1 localization to developing adherens junctions. In terms of processing, during apoptosis or with calcium influx, cleaved by a membrane-bound metalloproteinase (ADAM10), PS1/gamma-secretase and caspase-3. Processing by the metalloproteinase, induced by calcium influx, causes disruption of cell-cell adhesion and the subsequent release of beta-catenin into the cytoplasm. The residual membrane-tethered cleavage product is rapidly degraded via an intracellular proteolytic pathway. Cleavage by caspase-3 releases the cytoplasmic tail resulting in disintegration of the actin microfilament system. The gamma-secretase-mediated cleavage promotes disassembly of adherens junctions. During development of the cochlear organ of Corti, cleavage by ADAM10 at adherens junctions promotes pillar cell separation. N-glycosylation at Asn-641 is essential for expression, folding and trafficking. Addition of bisecting N-acetylglucosamine by MGAT3 modulates its cell membrane location. Post-translationally, ubiquitinated by a SCF complex containing SKP2, which requires prior phosphorylation by CK1/CSNK1A1. Ubiquitinated by CBLL1/HAKAI, requires prior phosphorylation at Tyr-758. In terms of processing, O-glycosylated. O-manosylated by TMTC1, TMTC2, TMTC3 or TMTC4. Ser-289 and Thr-513 are O-manosylated by TMTC2 or TMTC4 but not TMTC1 or TMTC3.

The protein localises to the cell junction. Its subcellular location is the adherens junction. It is found in the cell membrane. It localises to the endosome. The protein resides in the golgi apparatus. The protein localises to the trans-Golgi network. Its subcellular location is the cytoplasm. It is found in the desmosome. Functionally, cadherins are calcium-dependent cell adhesion proteins. They preferentially interact with themselves in a homophilic manner in connecting cells; cadherins may thus contribute to the sorting of heterogeneous cell types. CDH1 is involved in mechanisms regulating cell-cell adhesions, mobility and proliferation of epithelial cells. Promotes organization of radial actin fiber structure and cellular response to contractile forces, via its interaction with AMOTL2 which facilitates anchoring of radial actin fibers to CDH1 junction complexes at the cell membrane. Plays a role in the early stages of desmosome cell-cell junction formation via facilitating the recruitment of DSG2 and DSP to desmosome plaques. Has a potent invasive suppressor role. It is a ligand for integrin alpha-E/beta-7. E-Cad/CTF2 promotes non-amyloidogenic degradation of Abeta precursors. Has a strong inhibitory effect on APP C99 and C83 production. In Rattus norvegicus (Rat), this protein is Cadherin-1 (Cdh1).